We begin with the raw amino-acid sequence, 358 residues long: Homer protein homolog 3 (358 aa).

The interval 1–80 (MSTAREQPIF…TKTSQKFGQW (80 aa)) is required for interaction with NFATC2. A WH1 domain is found at 1–113 (MSTAREQPIF…EKFQEVKEAA (113 aa)). A coiled-coil region spans residues 95 to 122 (SEQQLTQFAEKFQEVKEAARLAREKSQD). Phosphoserine occurs at positions 120 and 158. Disordered stretches follow at residues 137-168 (QVPPSPLVSTNGPEEKLFRSQSADAPGPTERE) and 239-296 (AEPV…QVQD). A coiled-coil region spans residues 190–355 (ALQDSNQRLA…LREGLARLAE (166 aa)). A compositionally biased stretch (basic and acidic residues) spans 257–267 (LEARVQTKDQE). Residues 268–277 (IQTLKNQSTG) show a composition bias toward polar residues. The span at 280-290 (EAPDTAEREET) shows a compositional bias: basic and acidic residues.

Belongs to the Homer family. In terms of assembly, tetramer. Encodes coiled-coil structures that mediate homo- and heteromultimerization. Interacts with NFATC2; interaction is calcium independent; interaction competes with PPP3CA for NFATC2 binding; interaction is reduced by AKT activation. Interacts with NFATC1 and NFATC4. Interacts with SHANK1; forms a high-order complex at least composed of SHANK1 and HOMER3; the complex formation is regulated by CAMK2A-mediated phosphorylation.

The protein localises to the cytoplasm. The protein resides in the postsynaptic density. Its subcellular location is the synapse. Its function is as follows. Postsynaptic density scaffolding protein. Binds and cross-links cytoplasmic regions of GRM1, GRM5, ITPR1, DNM3, RYR1, RYR2, SHANK1 and SHANK3. By physically linking GRM1 and GRM5 with ER-associated ITPR1 receptors, it aids the coupling of surface receptors to intracellular calcium release. Negatively regulates T cell activation by inhibiting the calcineurin-NFAT pathway. Acts by competing with calcineurin/PPP3CA for NFAT protein binding, hence preventing NFAT activation by PPP3CA. The polypeptide is Homer protein homolog 3 (Rattus norvegicus (Rat)).